The chain runs to 285 residues: Cell division protein ZipA (285 aa).

Met1 is a topological domain (periplasmic). A helical transmembrane segment spans residues 2 to 22; it reads EIGLREWLIVIGIVVIGGILF. Residues 23-285 lie on the Cytoplasmic side of the membrane; the sequence is DGWRRMRGSK…FERRQLTHKR (263 aa). Residues 49–88 form a disordered region; that stretch reads AVSENSELLGPSRSVDFPQGAGFEPDEENLPSLSVRGPSR.

The protein belongs to the ZipA family. In terms of assembly, interacts with FtsZ via their C-terminal domains.

It localises to the cell inner membrane. Essential cell division protein that stabilizes the FtsZ protofilaments by cross-linking them and that serves as a cytoplasmic membrane anchor for the Z ring. Also required for the recruitment to the septal ring of downstream cell division proteins. This chain is Cell division protein ZipA, found in Azotobacter vinelandii (strain DJ / ATCC BAA-1303).